Here is a 130-residue protein sequence, read N- to C-terminus: Small ribosomal subunit protein uS9 (130 aa).

This sequence belongs to the universal ribosomal protein uS9 family.

This Acidovorax ebreus (strain TPSY) (Diaphorobacter sp. (strain TPSY)) protein is Small ribosomal subunit protein uS9.